A 570-amino-acid chain; its full sequence is Proline--tRNA ligase (570 aa).

It belongs to the class-II aminoacyl-tRNA synthetase family. ProS type 1 subfamily. Homodimer.

The protein resides in the cytoplasm. It carries out the reaction tRNA(Pro) + L-proline + ATP = L-prolyl-tRNA(Pro) + AMP + diphosphate. In terms of biological role, catalyzes the attachment of proline to tRNA(Pro) in a two-step reaction: proline is first activated by ATP to form Pro-AMP and then transferred to the acceptor end of tRNA(Pro). As ProRS can inadvertently accommodate and process non-cognate amino acids such as alanine and cysteine, to avoid such errors it has two additional distinct editing activities against alanine. One activity is designated as 'pretransfer' editing and involves the tRNA(Pro)-independent hydrolysis of activated Ala-AMP. The other activity is designated 'posttransfer' editing and involves deacylation of mischarged Ala-tRNA(Pro). The misacylated Cys-tRNA(Pro) is not edited by ProRS. The sequence is that of Proline--tRNA ligase from Syntrophomonas wolfei subsp. wolfei (strain DSM 2245B / Goettingen).